The primary structure comprises 505 residues: Tyrosine-protein kinase FRK (505 aa).

Phosphoserine is present on residues serine 37 and serine 40. Residues 42-110 (RHGHYFVALF…PSNYVAEDRS (69 aa)) form the SH3 domain. Residues 116 to 208 (WFFGAIGRSD…GLCVKLGKPC (93 aa)) form the SH2 domain. Phosphothreonine is present on threonine 178. The 258-residue stretch at 234-491 (IQLLKRLGSG…TLRWKLEDYF (258 aa)) folds into the Protein kinase domain. ATP contacts are provided by residues 240–248 (LGSGQFGEV) and lysine 262. The active-site Proton acceptor is the aspartate 354. At tyrosine 387 the chain carries Phosphotyrosine; by autocatalysis.

This sequence belongs to the protein kinase superfamily. Tyr protein kinase family. SRC subfamily. As to quaternary structure, interacts (via the SH3-domain) with PTEN. Interacts with RB1. Predominantly expressed in epithelial derived cell lines and tissues, especially normal liver, kidney, breast and colon.

The protein localises to the cytoplasm. It localises to the nucleus. The catalysed reaction is L-tyrosyl-[protein] + ATP = O-phospho-L-tyrosyl-[protein] + ADP + H(+). Non-receptor tyrosine-protein kinase that negatively regulates cell proliferation. Positively regulates PTEN protein stability through phosphorylation of PTEN on 'Tyr-336', which in turn prevents its ubiquitination and degradation, possibly by reducing its binding to NEDD4. May function as a tumor suppressor. The polypeptide is Tyrosine-protein kinase FRK (FRK) (Homo sapiens (Human)).